Consider the following 94-residue polypeptide: Cell division topological specificity factor (94 aa).

This sequence belongs to the MinE family.

Prevents the cell division inhibition by proteins MinC and MinD at internal division sites while permitting inhibition at polar sites. This ensures cell division at the proper site by restricting the formation of a division septum at the midpoint of the long axis of the cell. The sequence is that of Cell division topological specificity factor from Hamiltonella defensa subsp. Acyrthosiphon pisum (strain 5AT).